The sequence spans 87 residues: Small ribosomal subunit protein uS17 (87 aa).

It belongs to the universal ribosomal protein uS17 family. As to quaternary structure, part of the 30S ribosomal subunit.

Functionally, one of the primary rRNA binding proteins, it binds specifically to the 5'-end of 16S ribosomal RNA. In Staphylococcus carnosus (strain TM300), this protein is Small ribosomal subunit protein uS17.